A 276-amino-acid chain; its full sequence is Rhomboid protease GlpG (276 aa).

6 helical membrane passes run 94–114 (GPFTWAILLICIAVFILQNLL), 142–162 (AFMHFSLMHILFNLLWWWYLG), 169–189 (IGSGKLVVITVISALLSGFVQ), 192–212 (FSGPWFGGLSGVVYALMGYVW), 229–249 (LILFSLVWLIAGWFDVFGMAI), and 252–272 (GAHVAGLATGLAMAFVDTLHG). Ser201 functions as the Nucleophile in the catalytic mechanism. His254 is an active-site residue.

It belongs to the peptidase S54 family.

The protein localises to the cell inner membrane. It carries out the reaction Cleaves type-1 transmembrane domains using a catalytic dyad composed of serine and histidine that are contributed by different transmembrane domains.. Its function is as follows. Rhomboid-type serine protease that catalyzes intramembrane proteolysis. This chain is Rhomboid protease GlpG, found in Klebsiella pneumoniae (strain 342).